The sequence spans 278 residues: Mediator of RNA polymerase II transcription subunit 4 (278 aa).

Residues 57-88 (HARILTLRAQVEALEEQKKSSVTALATLRHEL) are a coiled coil. Disordered regions lie at residues 120 to 181 (VPPT…EEEE) and 240 to 278 (VEAPPEPEPVAEPVQAQAPRPARPAQPQATFDMFDDLDD). Composition is skewed to basic and acidic residues over residues 124–142 (YRERAPEAASDKDRDKDDA) and 160–172 (DAPKDRDNADNKP). Low complexity predominate over residues 250–268 (AEPVQAQAPRPARPAQPQA).

The protein belongs to the Mediator complex subunit 4 family. In terms of assembly, component of the Mediator complex.

Its subcellular location is the nucleus. Its function is as follows. Component of the Mediator complex, a coactivator involved in the regulated transcription of nearly all RNA polymerase II-dependent genes. Mediator functions as a bridge to convey information from gene-specific regulatory proteins to the basal RNA polymerase II transcription machinery. Mediator is recruited to promoters by direct interactions with regulatory proteins and serves as a scaffold for the assembly of a functional preinitiation complex with RNA polymerase II and the general transcription factors. This chain is Mediator of RNA polymerase II transcription subunit 4 (MED4), found in Phaeosphaeria nodorum (strain SN15 / ATCC MYA-4574 / FGSC 10173) (Glume blotch fungus).